Reading from the N-terminus, the 948-residue chain is Protocadherin alpha-2 (948 aa).

A signal peptide spans 1–22 (MASSIRRGRGAWTRLLSLLLLA). The Extracellular portion of the chain corresponds to 23 to 697 (AWEVGSGQLR…GSEATLVDVN (675 aa)). 6 consecutive Cadherin domains span residues 30-133 (QLRY…PPIF), 157-242 (ASDA…EPTF), 243-350 (AQSV…TPEV), 351-455 (SITS…APAF), 456-565 (AQPE…APAL), and 588-678 (GHVV…APKA). 4 N-linked (GlcNAc...) asparagine glycosylation sites follow: N257, N265, N362, and N548. The helical transmembrane segment at 698-718 (VYLIIAICAVSSLLVLTVLLY) threads the bilayer. The Cytoplasmic segment spans residues 719-948 (TALRCSVPPT…GNSTTDNSDQ (230 aa)). The stretch at 734–737 (PGKP) is one PXXP 1 repeat. The tract at residues 734 to 892 (PGKPTLVCSS…PDKFIIPGSP (159 aa)) is 5 X 4 AA repeats of P-X-X-P. 3 disordered regions span residues 754–801 (RRQR…RQPN), 829–854 (GPGG…EVSP), and 868–948 (KYGP…NSDQ). The segment covering 783–795 (AEEKQLSESEYVG) has biased composition (basic and acidic residues). 4 PXXP repeats span residues 797–800 (PRQP), 830–833 (PGGP), 871–874 (PGNP), and 889–892 (PGSP). A compositionally biased stretch (basic and acidic residues) spans 907–921 (DKSDFITFGKKEETK).

Its subcellular location is the cell membrane. In terms of biological role, potential calcium-dependent cell-adhesion protein. May be involved in the establishment and maintenance of specific neuronal connections in the brain. The chain is Protocadherin alpha-2 (PCDHA2) from Homo sapiens (Human).